The chain runs to 3953 residues: Zinc finger protein 469 (3953 aa).

Disordered stretches follow at residues 1–274 (MPGE…VSFQ), 313–465 (WPEE…MFFN), 512–672 (EWQG…FPFP), 763–784 (GHQR…RVPA), 869–1383 (ADEE…HSEL), 1400–1461 (PKPS…DLPV), 1575–1610 (LQRS…SQRR), 1703–1864 (SKTG…GASS), 1884–1947 (VSNT…TVEG), 1991–2030 (KTQG…TGPT), 2070–2700 (LTAA…TLGP), 2716–2915 (AGET…LSDS), 3001–3036 (EMPA…PGNT), and 3072–3110 (GPSF…PAKG). Over residues 187–198 (PPSSFTSTNYTS) the composition is skewed to polar residues. 2 stretches are compositionally biased toward pro residues: residues 202–211 (TPRPPAPGPP) and 324–335 (YPLPTQPAPSPL). Over residues 603–623 (STCSSLSPMSSSPANPSSEES) the composition is skewed to low complexity. Composition is skewed to pro residues over residues 768-780 (PGPP…PAAP) and 896-911 (KAPP…PQTP). Over residues 944–953 (QQRRGKQLKL) the composition is skewed to basic residues. Residues 963 to 975 (AAEGSGSGGGGRA) show a composition bias toward gly residues. The segment covering 981-991 (RRNDGLGERPP) has biased composition (basic and acidic residues). The span at 1005 to 1017 (RADPAPRVPRAAA) shows a compositional bias: low complexity. 2 stretches are compositionally biased toward basic residues: residues 1025–1042 (SRRR…RKAR) and 1058–1070 (KNRR…RRAG). Basic and acidic residues predominate over residues 1082–1093 (PGAEDRRLREYD). Residues 1094-1103 (FASESEEDEQ) are compositionally biased toward acidic residues. A compositionally biased stretch (basic and acidic residues) spans 1120–1137 (KRKEVELTQGPREDEPQK). Residues 1158–1177 (PGGSRPGPGRSPQARGPSRS) show a composition bias toward low complexity. Basic and acidic residues predominate over residues 1213–1229 (EETRPSLDFPQEAKEPE). 2 stretches are compositionally biased toward polar residues: residues 1278 to 1290 (PKPS…TAPH) and 1333 to 1350 (NPSS…SKIS). Residues 1577 to 1595 (RSKDTRGAPRELAEAESVG) are compositionally biased toward basic and acidic residues. Composition is skewed to polar residues over residues 1991-2005 (KTQG…QPEN) and 2014-2024 (NHASVNASPKT). A compositionally biased stretch (basic and acidic residues) spans 2243–2262 (DTPKDSTLRIPEDSRKEKLW). Residues 2409–2435 (TAPSSTASDFQSDSPQSHRNASHQTPQ) show a composition bias toward polar residues. Residues 2472 to 2498 (VTCEVCAASFRSGPGLSRHKARKHRPH) form a C2H2-type 1 zinc finger. Basic residues predominate over residues 2488–2498 (SRHKARKHRPH). Over residues 2506 to 2521 (SPAALPAQQPLEPLAQ) the composition is skewed to low complexity. A compositionally biased stretch (basic and acidic residues) spans 2534-2546 (SGKERPNHSRGDP). Over residues 2565–2574 (PGSPHSQQLH) the composition is skewed to low complexity. Positions 2592–2631 (PRPDQAREDELHPKQAEKREGRRWRREPTVDSPSHSEGKS) are enriched in basic and acidic residues. Basic residues predominate over residues 2632–2642 (NKKRGKLRGRR). The segment covering 2664-2676 (PSPAMASYAASPS) has biased composition (low complexity). Positions 2777–2787 (DSSRAHSRSEE) are enriched in basic and acidic residues. A compositionally biased stretch (low complexity) spans 2805–2816 (TSSSPADSTTSS). The span at 2869–2879 (LTRKRNPHVYG) shows a compositional bias: basic residues. The span at 3095–3105 (AAGAGRAQGRG) shows a compositional bias: low complexity. A C2H2-type 2 zinc finger spans residues 3115-3137 (YKCKVCFQRFRSLGELDLHKLAH). The tract at residues 3232–3322 (TEPAPKHHRG…PDPWAGGEPL (91 aa)) is disordered. Over residues 3260–3272 (GEAKKDSPGERAK) the composition is skewed to basic and acidic residues. Pro residues predominate over residues 3302–3314 (PGPPRTTPSPSPD). C2H2-type zinc fingers lie at residues 3337–3359 (RDCH…LAVH) and 3365–3388 (YLCP…GGAH). Residues 3418–3442 (FACSSCNYTFAKKEQFDRHMNKHLR) form a C2H2-type 5; degenerate zinc finger. Disordered regions lie at residues 3448–3501 (FAFR…PILS), 3518–3559 (STTK…SPFP), and 3576–3925 (ERPE…HRTA). A compositionally biased stretch (low complexity) spans 3584–3602 (PGSPGPLLQQALPLGASLP). Residues 3633–3651 (CAPDHFQEDHLLQKEKEVS) are compositionally biased toward basic and acidic residues. Composition is skewed to low complexity over residues 3728-3741 (PGPS…PRPG) and 3749-3759 (QPQPASGQLQS). 2 stretches are compositionally biased toward basic and acidic residues: residues 3876 to 3892 (EQRK…DRLG) and 3915 to 3925 (EPAEPHTHRTA).

Belongs to the krueppel C2H2-type zinc-finger protein family. As to expression, detected in cornea, sclera, skin fibroblasts and striated muscle.

The protein localises to the nucleus. In terms of biological role, may be involved in transcriptional regulation. This chain is Zinc finger protein 469 (ZNF469), found in Homo sapiens (Human).